A 61-amino-acid polypeptide reads, in one-letter code: Large ribosomal subunit protein bL28 (61 aa).

The disordered stretch occupies residues 1 to 26 (MAKDFINGKRTQFGNKRSHALNSSRR). A compositionally biased stretch (polar residues) spans 9-25 (KRTQFGNKRSHALNSSR).

This sequence belongs to the bacterial ribosomal protein bL28 family.

The polypeptide is Large ribosomal subunit protein bL28 (Limosilactobacillus reuteri (strain DSM 20016) (Lactobacillus reuteri)).